Consider the following 167-residue polypeptide: Protein tyrosine phosphatase type IVA 2 (167 aa).

One can recognise a Tyrosine-protein phosphatase domain in the interval 5 to 158 (APVEISYENM…YRPKMRLRFR (154 aa)). The cysteines at positions 46 and 101 are disulfide-linked. The active-site Proton donor is the aspartate 69. Catalysis depends on cysteine 101, which acts as the Phosphocysteine intermediate. 102 to 107 (VAGLGR) provides a ligand contact to phosphate. Arginine 107 serves as a coordination point for substrate. Cysteine methyl ester is present on cysteine 164. A lipid anchor (S-farnesyl cysteine) is attached at cysteine 164. A propeptide spans 165–167 (CVQ) (removed in mature form).

It belongs to the protein-tyrosine phosphatase family. In terms of assembly, in contrast to PTP4A1 and PTP4A3, does not interact with tubulin. Interacts with RABGGTB. Farnesylated. Farnesylation is required for membrane targeting and for interaction with RABGGTB. As to expression, expressed in skeletal muscle, and at lower levels in liver, lung, heart, kidney, brain, testis and spleen.

Its subcellular location is the cell membrane. The protein localises to the early endosome. It is found in the cytoplasm. The catalysed reaction is O-phospho-L-tyrosyl-[protein] + H2O = L-tyrosyl-[protein] + phosphate. Its activity is regulated as follows. Inhibited by sodium orthovanadate and pentamidine. Functionally, protein tyrosine phosphatase which stimulates progression from G1 into S phase during mitosis. Inhibits geranylgeranyl transferase type II activity by blocking the association between RABGGTA and RABGGTB. This chain is Protein tyrosine phosphatase type IVA 2 (Ptp4a2), found in Mus musculus (Mouse).